A 636-amino-acid chain; its full sequence is Dehydrogenase ARMGADRAFT_1018426 (636 aa).

The signal sequence occupies residues methionine 1 to serine 19. FAD-binding positions include threonine 49–alanine 50 and glutamate 70–glycine 71. An N-linked (GlcNAc...) asparagine glycan is attached at asparagine 99. FAD is bound by residues tryptophan 104 and asparagine 134–threonine 137. Residue asparagine 253 is glycosylated (N-linked (GlcNAc...) asparagine). Valine 280 is a binding site for FAD. Asparagine 333, asparagine 380, asparagine 394, and asparagine 498 each carry an N-linked (GlcNAc...) asparagine glycan. Histidine 570 serves as the catalytic Proton acceptor. Residues alanine 603 and proline 614 to serine 615 each bind FAD.

The protein belongs to the GMC oxidoreductase family. FAD is required as a cofactor.

The protein operates within secondary metabolite biosynthesis. In terms of biological role, dehydrogenase, part of the gene cluster that mediates the biosynthesis of melleolides, a range of antifungal and phytotoxic polyketide derivatives composed of an orsellinic acid (OA) moiety esterified to various sesquiterpene alcohols. The first step in melleolides biosynthesis is performed by the delta(6)-protoilludene synthase PRO1 which catalyzes the cyclization of farnesyl diphosphate to protoilludene. The orsellinic acid synthase armB produces OA by condensing acetyl-CoA with 3 malonyl-CoA units in a three-round chain elongation reaction folowed by a C2-C7 ring closure. ArmB further catalyzes the trans-esterification of OA to the various sesquiterpene alcohols resulting from the hydroxylation of protoilludene. The melleolides cluster also includes 5 cytochrome P450 monooxygenases, 4 NAD(+)-dependent oxidoreductases, one flavin-dependent oxidoreductase, and one O-methyltransferase. The cytochrome P450 monooxygenases may be involved in protoilludene hydroxylation to elaborate melleolides with multiple alcohol groups, such as melleolide D, which carries alcohol functionalities at C-4, C-5, C-10, and C-13. The role of the NAD(+)-dependent enzymes remains unknown. Numerous melleolides, including arnamial, show 5'-O-methylation of the aromatic moiety which may be catalyzed by the methyltransferase encoded in the cluster. The flavin-dependent oxidoreductase might represent the dehydrogenase yielding the aldehyde in position 1 of arnamial and other melleolides. Finally, several halogenase localized outside of the cluster, are able to catalyze the transfer of a single chlorine atom to the melleolide backbone, resulting in a 6'-chloromelleolide product. The sequence is that of Dehydrogenase ARMGADRAFT_1018426 from Armillaria gallica (Bulbous honey fungus).